Reading from the N-terminus, the 300-residue chain is ESX-5 secretion-associated protein EspG5 (300 aa).

The protein belongs to the EspG family. Interacts specifically with ESX-5-dependent PE/PPE proteins. Forms a 1:1:1 heterotrimeric complex with the PE25/PPE41 dimer, via PPE41. Binding of EspG5 does not cause conformational changes in the PE25/PPE41 dimer. Forms a 1:1:1 heterotrimeric complex with the PE8/PPE15 dimer, via PPE15.

Its subcellular location is the cytoplasm. In terms of biological role, specific chaperone for cognate PE/PPE proteins. Plays an important role in preventing aggregation of PE/PPE dimers. This Mycobacterium tuberculosis (strain ATCC 25618 / H37Rv) protein is ESX-5 secretion-associated protein EspG5.